The sequence spans 270 residues: Nuclease P1 (270 aa).

The a divalent metal cation site is built by Trp-1, His-6, His-15, Asp-45, and His-60. A substrate-binding site is contributed by 1–6; that stretch reads WGALGH. Residues 45–51, 60–63, and 73–78 each bind substrate; these read DEYRLTS, HFID, and NVDYER. Intrachain disulfides connect Cys-72–Cys-217 and Cys-80–Cys-85. A glycan (N-linked (GlcNAc...) asparagine) is linked at Asn-92. Positions 116, 120, and 126 each coordinate a divalent metal cation. The segment at 116–164 is substrate binding; it reads HFIGDMTQPLHDEAYAVGGNKINVTFDGYHDNLHSDWDTYMPQKLIGGH. Asn-138 carries N-linked (GlcNAc...) asparagine glycosylation. His-149 and Asp-153 together coordinate a divalent metal cation. N-linked (GlcNAc...) asparagine glycosylation is found at Asn-184 and Asn-197.

Belongs to the nuclease type I family. Zn(2+) is required as a cofactor.

Its subcellular location is the secreted. The catalysed reaction is Endonucleolytic cleavage to 5'-phosphomononucleotide and 5'-phosphooligonucleotide end-products.. Functionally, hydrolyzes only single-stranded DNA and RNA without apparent specificity for bases. In Penicillium citrinum, this protein is Nuclease P1.